The chain runs to 390 residues: Magnesium-protoporphyrin IX monomethyl ester [oxidative] cyclase (390 aa).

The protein belongs to the AcsF family. The cofactor is Fe cation.

It carries out the reaction Mg-protoporphyrin IX 13-monomethyl ester + 3 NADPH + 3 O2 + 2 H(+) = 3,8-divinyl protochlorophyllide a + 3 NADP(+) + 5 H2O. It functions in the pathway porphyrin-containing compound metabolism; chlorophyll biosynthesis (light-independent). Functionally, catalyzes the formation of the isocyclic ring in chlorophyll biosynthesis. Mediates the cyclase reaction, which results in the formation of divinylprotochlorophyllide (Pchlide) characteristic of all chlorophylls from magnesium-protoporphyrin IX 13-monomethyl ester (MgPMME). The chain is Magnesium-protoporphyrin IX monomethyl ester [oxidative] cyclase from Prochlorococcus marinus subsp. pastoris (strain CCMP1986 / NIES-2087 / MED4).